The primary structure comprises 213 residues: Virion protein US10 homolog (213 aa).

Belongs to the herpesviridae US10 family. Phosphorylated.

The protein localises to the virion tegument. Its subcellular location is the host nucleus matrix. This Gallid herpesvirus 2 (strain GA) (GaHV-2) protein is Virion protein US10 homolog (US639).